The following is a 397-amino-acid chain: Methylthioribose kinase (397 aa).

ATP is bound by residues Asn-44, Lys-61, and 115-117 (EDL). Asp-233 serves as a coordination point for substrate. Residue 250 to 252 (DPE) participates in ATP binding. Arg-340 contributes to the substrate binding site.

The protein belongs to the methylthioribose kinase family. Homodimer.

It carries out the reaction 5-(methylsulfanyl)-D-ribose + ATP = 5-(methylsulfanyl)-alpha-D-ribose 1-phosphate + ADP + H(+). It participates in amino-acid biosynthesis; L-methionine biosynthesis via salvage pathway; S-methyl-5-thio-alpha-D-ribose 1-phosphate from S-methyl-5'-thioadenosine (hydrolase route): step 2/2. Its function is as follows. Catalyzes the phosphorylation of methylthioribose into methylthioribose-1-phosphate. This chain is Methylthioribose kinase (mtnK), found in Bacillus subtilis (strain 168).